The primary structure comprises 88 residues: Small ribosomal subunit protein uS15 (88 aa).

Belongs to the universal ribosomal protein uS15 family. In terms of assembly, part of the 30S ribosomal subunit. Forms a bridge to the 50S subunit in the 70S ribosome, contacting the 23S rRNA.

Its function is as follows. One of the primary rRNA binding proteins, it binds directly to 16S rRNA where it helps nucleate assembly of the platform of the 30S subunit by binding and bridging several RNA helices of the 16S rRNA. Functionally, forms an intersubunit bridge (bridge B4) with the 23S rRNA of the 50S subunit in the ribosome. This chain is Small ribosomal subunit protein uS15, found in Francisella tularensis subsp. holarctica (strain LVS).